Reading from the N-terminus, the 424-residue chain is UDP-N-acetylglucosamine 1-carboxyvinyltransferase (424 aa).

Position 22–23 (22–23 (KN)) interacts with phosphoenolpyruvate. Residue R93 coordinates UDP-N-acetyl-alpha-D-glucosamine. C117 acts as the Proton donor in catalysis. Residue C117 is modified to 2-(S-cysteinyl)pyruvic acid O-phosphothioketal. Residues 122-126 (RPVDL), 162-165 (KVSV), D307, and I329 contribute to the UDP-N-acetyl-alpha-D-glucosamine site.

This sequence belongs to the EPSP synthase family. MurA subfamily.

The protein localises to the cytoplasm. The catalysed reaction is phosphoenolpyruvate + UDP-N-acetyl-alpha-D-glucosamine = UDP-N-acetyl-3-O-(1-carboxyvinyl)-alpha-D-glucosamine + phosphate. It participates in cell wall biogenesis; peptidoglycan biosynthesis. Functionally, cell wall formation. Adds enolpyruvyl to UDP-N-acetylglucosamine. This is UDP-N-acetylglucosamine 1-carboxyvinyltransferase from Haemophilus influenzae (strain PittEE).